Here is a 320-residue protein sequence, read N- to C-terminus: Olfactory receptor 2AT4 (320 aa).

The Extracellular portion of the chain corresponds to 1–31; that stretch reads MDATACNESVDGSPVFYLLGIPSLPETFFLP. Residue Asn-7 is glycosylated (N-linked (GlcNAc...) asparagine). Residues 32 to 52 traverse the membrane as a helical segment; it reads VFFIFLLFYLLILMGNALILV. The Cytoplasmic segment spans residues 53 to 62; it reads AVVAEPSLHK. The helical transmembrane segment at 63–83 threads the bilayer; sequence PMYFFLINLSTLDILFTTTTV. Residues 84–102 are Extracellular-facing; that stretch reads PKMLSLFLLGDRFLSFSSC. An intrachain disulfide couples Cys-102 to Cys-184. Residues 103–123 form a helical membrane-spanning segment; that stretch reads LLQMYLFQSFTCSEAFILVVM. Over 124-145 the chain is Cytoplasmic; sequence AYDRYVAICHPLHYPVLMNPQT. Residues 146-166 form a helical membrane-spanning segment; the sequence is NATLAASAWLTALLLPIPAVV. At 167 to 200 the chain is on the extracellular side; sequence RTSQMAYNSIAYIYHCFCDHLAVVQASCSDTTPQ. Residues 201–221 form a helical membrane-spanning segment; that stretch reads TLMGFCIAMVVSFLPLLLVLL. The Cytoplasmic segment spans residues 222-245; sequence SYVHILASVLRISSLEGRAKAFST. The chain crosses the membrane as a helical span at residues 246 to 266; it reads CSSHLLVVGTYYSSIAIAYVA. The Extracellular segment spans residues 267-276; the sequence is YRADLPLDFH. Residues 277 to 297 traverse the membrane as a helical segment; the sequence is IMGNVVYAILTPILNPLIYTL. At 298–320 the chain is on the cytoplasmic side; that stretch reads RNRDVKAAITKIMSQDPGCDRSI.

This sequence belongs to the G-protein coupled receptor 1 family. As to expression, detected in the keratinocytes of the epidermis (at protein level). Detected in hair follicles in proximal outer root sheath and hair matrix keratinocytes (at protein level).

It is found in the cell membrane. In terms of biological role, olfactory receptor. Activated by the synthetic sandalwood odorant sandalore. Endogenous ligand is unknown. The activity of this receptor is probably mediated by G proteins which induce elevation of intracellular Ca(2+), a cAMP-dependent pathway and phosphorylation of MAPK1/ERK2, MAPK3/ERK1 and p38 MAPKs. Activation of OR2AT4 induces proliferation, migration, and re-epithelialization during wound-healing processes of keratinocytes. Stimulation of OR2AT4 by sandalore promotes hair growth by decreasing apoptosis and increasing production of the anagen-prolonging growth factor IGF1 as well as other pathways involving various kinases. In Homo sapiens (Human), this protein is Olfactory receptor 2AT4.